A 377-amino-acid polypeptide reads, in one-letter code: uncharacterized protein (377 aa).

This is an uncharacterized protein from Bacillus subtilis (strain 168).